The primary structure comprises 217 residues: EF-hand domain-containing protein D2 homolog (217 aa).

The span at 1–28 (MSVSSNASSASNKDSVDSPSSTTNTDSS) shows a compositional bias: low complexity. Residues 1–29 (MSVSSNASSASNKDSVDSPSSTTNTDSSE) form a disordered region. 2 consecutive EF-hand domains span residues 69 to 104 (NQIK…LGAP) and 105 to 140 (QTHL…AQAG). The Ca(2+) site is built by D82, D86, E93, D118, D120, D122, K124, and E129. A compositionally biased stretch (basic and acidic residues) spans 191–204 (EQEERRREEEERAQ). Positions 191–217 (EQEERRREEEERAQRRQQFQQRAAIFQ) are disordered. Residues 206–217 (RQQFQQRAAIFQ) show a composition bias toward low complexity.

In Drosophila melanogaster (Fruit fly), this protein is EF-hand domain-containing protein D2 homolog (Swip-1).